A 340-amino-acid polypeptide reads, in one-letter code: Cysteinyl leukotriene receptor 1 (340 aa).

Over 1-31 the chain is Extracellular; it reads MDGVRNLTVSCASSNTCNDTIDDFRNQVYST. N-linked (GlcNAc...) asparagine glycosylation is found at Asn6 and Asn18. The chain crosses the membrane as a helical span at residues 32 to 52; it reads LYSMITVVGFFGNGFVLYVLI. The Cytoplasmic portion of the chain corresponds to 53–60; the sequence is KTYHEKSA. A helical membrane pass occupies residues 61 to 81; the sequence is YQVYMINLAVADLLCVCTLPL. The Extracellular portion of the chain corresponds to 82 to 109; the sequence is RVVYYVHKGIWLFGDFLCRLSTYALYVN. An intrachain disulfide couples Cys99 to Cys176. The chain crosses the membrane as a helical span at residues 110–130; the sequence is LYCSIFFMTAMSFFRCIAIVF. Topologically, residues 131 to 144 are cytoplasmic; that stretch reads PVQNINLITHKKAK. Residues 145-165 traverse the membrane as a helical segment; the sequence is IVCIAIWIFVILTSSPFLMST. The Extracellular segment spans residues 166–196; it reads SYKDEKNNTKCFEPPQXNQAKYHVLVLHYVS. The N-linked (GlcNAc...) asparagine glycan is linked to Asn172. Residues 197-217 traverse the membrane as a helical segment; the sequence is LFVGFIIPFVIIIVCYTMIIL. Residues 218–233 are Cytoplasmic-facing; the sequence is TLLKNSMKKNISSRKK. The helical transmembrane segment at 234 to 254 threads the bilayer; the sequence is AIGMIIVVTAAFLISFMPYHI. At 255–279 the chain is on the extracellular side; the sequence is QRTIHLHFLHNDTKHCDSVLRMQKS. Residue Asn265 is glycosylated (N-linked (GlcNAc...) asparagine). A helical transmembrane segment spans residues 280–300; it reads VXITLSLAASNCCFDPLLYFF. The Cytoplasmic portion of the chain corresponds to 301-340; that stretch reads SGGNFREGLSTFRKHSLSTMTYVPKKKTSLPEKAQEIYKE.

This sequence belongs to the G-protein coupled receptor 1 family.

Its subcellular location is the cell membrane. Its function is as follows. Receptor for cysteinyl leukotrienes mediating constriction of the microvascular smooth muscle during an inflammatory response. This response is mediated via a G-protein that activates a phosphatidylinositol-calcium second messenger system. In Sus scrofa (Pig), this protein is Cysteinyl leukotriene receptor 1 (CYSLTR1).